A 366-amino-acid chain; its full sequence is Neutral protease 2 homolog BDBG_02110 (366 aa).

Residues 1 to 19 (MQLSSVLLTAAGLLAPVYS) form the signal peptide. The propeptide occupies 23–184 (ISIGRRSEGL…RAKIHDHLAQ (162 aa)). Residues asparagine 123 and asparagine 192 are each glycosylated (N-linked (GlcNAc...) asparagine). Cysteine 272 and cysteine 290 are disulfide-bonded. Residue histidine 314 participates in Zn(2+) binding. The active site involves glutamate 315. Residue histidine 318 coordinates Zn(2+).

Belongs to the peptidase M35 family. Requires Zn(2+) as cofactor.

The protein resides in the secreted. It catalyses the reaction Preferential cleavage of bonds with hydrophobic residues in P1'. Also 3-Asn-|-Gln-4 and 8-Gly-|-Ser-9 bonds in insulin B chain.. Functionally, secreted metalloproteinase that allows assimilation of proteinaceous substrates. Shows high activities on basic nuclear substrates such as histone and protamine. The polypeptide is Neutral protease 2 homolog BDBG_02110 (Blastomyces gilchristii (strain SLH14081) (Blastomyces dermatitidis)).